A 576-amino-acid chain; its full sequence is Proline--tRNA ligase (576 aa).

It belongs to the class-II aminoacyl-tRNA synthetase family. ProS type 1 subfamily. In terms of assembly, homodimer.

It is found in the cytoplasm. It catalyses the reaction tRNA(Pro) + L-proline + ATP = L-prolyl-tRNA(Pro) + AMP + diphosphate. Catalyzes the attachment of proline to tRNA(Pro) in a two-step reaction: proline is first activated by ATP to form Pro-AMP and then transferred to the acceptor end of tRNA(Pro). As ProRS can inadvertently accommodate and process non-cognate amino acids such as alanine and cysteine, to avoid such errors it has two additional distinct editing activities against alanine. One activity is designated as 'pretransfer' editing and involves the tRNA(Pro)-independent hydrolysis of activated Ala-AMP. The other activity is designated 'posttransfer' editing and involves deacylation of mischarged Ala-tRNA(Pro). The misacylated Cys-tRNA(Pro) is not edited by ProRS. This Bordetella bronchiseptica (strain ATCC BAA-588 / NCTC 13252 / RB50) (Alcaligenes bronchisepticus) protein is Proline--tRNA ligase.